We begin with the raw amino-acid sequence, 585 residues long: MNIFADFDTRIKNALETLDLVKENREKVDFSRITVESPRDLSHGDVATNAAMVLAKPLGTNPRALAELLVPALQADGDVDGVNVAGPGFINLKVSVGYWQRLLADMIGQGVDFGRSTVGAGQKINVEYVSANPTGPMHVGHCRGAVVGDTLANLLAFAGYGVTKEYYINDAGSQIDVLARSVFLRYREALGEDIGSIPSGLYPGDYLVPVGQALADEYGIKLRAMPEEKWLPIVKDKAIDAMMVMIREDLALLNVRHDVFFSERTLHEGNGGPILSAINDLTFKGHVYKGTLPPPKGELPDDWEDREQTLFRSTEVGDDMDRALMKSDGSYTYFAADVAYFKNKFDRGFSEMIYVLGADHGGYVKRLEAVARAVSEGKSKLTVLLCQLVKLFRDGEPVKMSKRSGDFVTLRDVVDEVGRDPVRFMMLYRKNSEPLDFDFAKVTEQSKDNPVFYVQYAHARCKSIFRQAQEAFPGLAPSAEDMAASVALISDINELQLVAKLAEYPRLIESAALSHEPHRLAFYLYDLAGSFHGHWNKGKDHQELRFINDKNRELSIARLGLVNAVANVLKSGLTLLGADAPDEMR.

Residues 131 to 141 carry the 'HIGH' region motif; the sequence is ANPTGPMHVGH.

It belongs to the class-I aminoacyl-tRNA synthetase family. Monomer.

The protein resides in the cytoplasm. The catalysed reaction is tRNA(Arg) + L-arginine + ATP = L-arginyl-tRNA(Arg) + AMP + diphosphate. The polypeptide is Arginine--tRNA ligase (Agrobacterium fabrum (strain C58 / ATCC 33970) (Agrobacterium tumefaciens (strain C58))).